Here is a 433-residue protein sequence, read N- to C-terminus: Putative ankyrin repeat protein R578 (433 aa).

4 ANK repeats span residues 166 to 195, 197 to 224, 356 to 386, and 388 to 415; these read NKEIILRNAVITNNLEMLEFAIEKGAILSE, DHLIVQSIRTSNLDLIKYIFSHIDLSKL, VNPNILKTSIYCCNNFDITKYLIDNGADIHS, and PSLIKTAITSGNLKTATFLMDNGAICDE.

This is Putative ankyrin repeat protein R578 from Acanthamoeba polyphaga mimivirus (APMV).